Here is a 171-residue protein sequence, read N- to C-terminus: Calcium-binding protein F-like (171 aa).

4 EF-hand domains span residues 6 to 41 (KIFE…KMNG), 57 to 80 (IDMD…KAKK), 89 to 124 (AALA…RGYT), and 130 to 159 (DQYL…RRID). Ca(2+) contacts are provided by aspartate 19, asparagine 21, aspartate 23, serine 25, and aspartate 30. Positions 102, 104, 106, 108, 113, 137, 139, 141, 143, and 148 each coordinate Ca(2+).

The protein is Calcium-binding protein F-like (cbp12) of Dictyostelium discoideum (Social amoeba).